Consider the following 331-residue polypeptide: Tetraacyldisaccharide 4'-kinase (331 aa).

Position 60–67 (60–67 (TVGGTGKT)) interacts with ATP.

It belongs to the LpxK family.

The catalysed reaction is a lipid A disaccharide + ATP = a lipid IVA + ADP + H(+). Its pathway is glycolipid biosynthesis; lipid IV(A) biosynthesis; lipid IV(A) from (3R)-3-hydroxytetradecanoyl-[acyl-carrier-protein] and UDP-N-acetyl-alpha-D-glucosamine: step 6/6. Functionally, transfers the gamma-phosphate of ATP to the 4'-position of a tetraacyldisaccharide 1-phosphate intermediate (termed DS-1-P) to form tetraacyldisaccharide 1,4'-bis-phosphate (lipid IVA). This is Tetraacyldisaccharide 4'-kinase from Pseudomonas syringae pv. syringae (strain B728a).